A 412-amino-acid polypeptide reads, in one-letter code: Serine hydroxymethyltransferase (412 aa).

Residues leucine 120 and 124–126 (GHL) each bind (6S)-5,6,7,8-tetrahydrofolate. An N6-(pyridoxal phosphate)lysine modification is found at lysine 228. 353–355 (SPF) provides a ligand contact to (6S)-5,6,7,8-tetrahydrofolate.

Belongs to the SHMT family. As to quaternary structure, homodimer. The cofactor is pyridoxal 5'-phosphate.

It is found in the cytoplasm. The enzyme catalyses (6R)-5,10-methylene-5,6,7,8-tetrahydrofolate + glycine + H2O = (6S)-5,6,7,8-tetrahydrofolate + L-serine. The protein operates within one-carbon metabolism; tetrahydrofolate interconversion. It participates in amino-acid biosynthesis; glycine biosynthesis; glycine from L-serine: step 1/1. Functionally, catalyzes the reversible interconversion of serine and glycine with tetrahydrofolate (THF) serving as the one-carbon carrier. This reaction serves as the major source of one-carbon groups required for the biosynthesis of purines, thymidylate, methionine, and other important biomolecules. Also exhibits THF-independent aldolase activity toward beta-hydroxyamino acids, producing glycine and aldehydes, via a retro-aldol mechanism. This chain is Serine hydroxymethyltransferase, found in Lachnoclostridium phytofermentans (strain ATCC 700394 / DSM 18823 / ISDg) (Clostridium phytofermentans).